A 113-amino-acid polypeptide reads, in one-letter code: Large ribosomal subunit protein bL19 (113 aa).

This sequence belongs to the bacterial ribosomal protein bL19 family.

Functionally, this protein is located at the 30S-50S ribosomal subunit interface and may play a role in the structure and function of the aminoacyl-tRNA binding site. The sequence is that of Large ribosomal subunit protein bL19 from Corynebacterium kroppenstedtii (strain DSM 44385 / JCM 11950 / CIP 105744 / CCUG 35717).